The sequence spans 298 residues: Small ribosomal subunit biogenesis GTPase RsgA 1 (298 aa).

The 162-residue stretch at 63 to 224 (QTQLVRPPVA…VADTPGFSSY (162 aa)) folds into the CP-type G domain. Residues 112 to 115 (AKTD) and 167 to 175 (GQTGAGKST) each bind GTP. C248, C253, H255, and C261 together coordinate Zn(2+).

Belongs to the TRAFAC class YlqF/YawG GTPase family. RsgA subfamily. As to quaternary structure, monomer. Associates with 30S ribosomal subunit, binds 16S rRNA. Zn(2+) serves as cofactor.

Its subcellular location is the cytoplasm. Its function is as follows. One of several proteins that assist in the late maturation steps of the functional core of the 30S ribosomal subunit. Helps release RbfA from mature subunits. May play a role in the assembly of ribosomal proteins into the subunit. Circularly permuted GTPase that catalyzes slow GTP hydrolysis, GTPase activity is stimulated by the 30S ribosomal subunit. This chain is Small ribosomal subunit biogenesis GTPase RsgA 1, found in Lactiplantibacillus plantarum (strain ATCC BAA-793 / NCIMB 8826 / WCFS1) (Lactobacillus plantarum).